Here is a 115-residue protein sequence, read N- to C-terminus: MPMFIVNTNVPRASVPEGFLSELTQQLAQATGKPAQYIAVHVVPDQLMTFSGTSDPCALCSLHSIGKIGGAQNRNYSKLLCGLLSDRLHISPDRVYINYYDMNAANVGWNGSTFA.

The active-site Proton acceptor; via imino nitrogen is the Pro2. Substrate is bound by residues Lys33 and Ile65. Lys78 carries the post-translational modification N6-acetyllysine; alternate. Lys78 is subject to N6-succinyllysine; alternate. Substrate is bound at residue Asn98.

It belongs to the MIF family. Homotrimer. Interacts with CXCR2 extracellular domain. Interacts with the CD74 extracellular domain, USO1, COPS5 and BNIPL. In terms of tissue distribution, expressed in a wide variety of organs including brain, spleen, liver, muscle and kidney.

It localises to the secreted. Its subcellular location is the cytoplasm. It catalyses the reaction 3-phenylpyruvate = enol-phenylpyruvate. It carries out the reaction L-dopachrome = 5,6-dihydroxyindole-2-carboxylate. Functionally, pro-inflammatory cytokine involved in the innate immune response to bacterial pathogens. The expression of MIF at sites of inflammation suggests a role as mediator in regulating the function of macrophages in host defense. Counteracts the anti-inflammatory activity of glucocorticoids. Has phenylpyruvate tautomerase and dopachrome tautomerase activity (in vitro), but the physiological substrate is not known. It is not clear whether the tautomerase activity has any physiological relevance, and whether it is important for cytokine activity. The chain is Macrophage migration inhibitory factor (Mif) from Rattus norvegicus (Rat).